A 222-amino-acid polypeptide reads, in one-letter code: 3,4-dihydroxy-2-butanone 4-phosphate synthase (222 aa).

Residues R37 to E38, D42, R150 to T154, and E174 each bind D-ribulose 5-phosphate. Residue E38 coordinates Mg(2+). Residue H153 participates in Mg(2+) binding.

The protein belongs to the DHBP synthase family. As to quaternary structure, homodimer. Mg(2+) serves as cofactor. Requires Mn(2+) as cofactor.

The enzyme catalyses D-ribulose 5-phosphate = (2S)-2-hydroxy-3-oxobutyl phosphate + formate + H(+). It functions in the pathway cofactor biosynthesis; riboflavin biosynthesis; 2-hydroxy-3-oxobutyl phosphate from D-ribulose 5-phosphate: step 1/1. Functionally, catalyzes the conversion of D-ribulose 5-phosphate to formate and 3,4-dihydroxy-2-butanone 4-phosphate. In Chlorobium limicola (strain DSM 245 / NBRC 103803 / 6330), this protein is 3,4-dihydroxy-2-butanone 4-phosphate synthase.